A 172-amino-acid polypeptide reads, in one-letter code: Xanthine-guanine phosphoribosyltransferase (172 aa).

5-phospho-alpha-D-ribose 1-diphosphate-binding positions include 47-48 (RG) and 106-114 (DDLVDTGKT). Mg(2+) is bound at residue D107. Residues D110 and I153 each coordinate guanine. 2 residues coordinate xanthine: D110 and I153. Residues 110-114 (DTGKT) and 152-153 (WI) each bind GMP.

The protein belongs to the purine/pyrimidine phosphoribosyltransferase family. XGPT subfamily. As to quaternary structure, homotetramer. It depends on Mg(2+) as a cofactor.

Its subcellular location is the cell inner membrane. The enzyme catalyses GMP + diphosphate = guanine + 5-phospho-alpha-D-ribose 1-diphosphate. It catalyses the reaction XMP + diphosphate = xanthine + 5-phospho-alpha-D-ribose 1-diphosphate. The catalysed reaction is IMP + diphosphate = hypoxanthine + 5-phospho-alpha-D-ribose 1-diphosphate. Its pathway is purine metabolism; GMP biosynthesis via salvage pathway; GMP from guanine: step 1/1. The protein operates within purine metabolism; XMP biosynthesis via salvage pathway; XMP from xanthine: step 1/1. Its function is as follows. Purine salvage pathway enzyme that catalyzes the transfer of the ribosyl-5-phosphate group from 5-phospho-alpha-D-ribose 1-diphosphate (PRPP) to the N9 position of the 6-oxopurines guanine and xanthine to form the corresponding ribonucleotides GMP (guanosine 5'-monophosphate) and XMP (xanthosine 5'-monophosphate), with the release of PPi. To a lesser extent, also acts on hypoxanthine. In Rhodopseudomonas palustris (strain HaA2), this protein is Xanthine-guanine phosphoribosyltransferase.